Here is a 671-residue protein sequence, read N- to C-terminus: cGMP-dependent protein kinase 1 (671 aa).

An N-acetylserine modification is found at Ser2. Positions 2 to 59 (SELEEDFAKILMLKEERIKELEKRLSEKEEEIQELKRKLHKCQSVLPVPSTHIGPRTT) form a coiled coil. The required for dimerization stretch occupies residues 2–102 (SELEEDFAKI…LIKEAILDND (101 aa)). Residues 9–44 (AKILMLKEERIKELEKRLSEKEEEIQELKRKLHKCQ) are leucine-zipper. The interval 50–75 (PSTHIGPRTTRAQGISAEPQTYRSFH) is autoinhibitory domain. At Thr59 the chain carries Phosphothreonine; by autocatalysis. A cGMP-binding, high affinity region spans residues 103–220 (FMKNLELSQI…EYMEFLKSVP (118 aa)). Residues 167–170 (GELA), 177–178 (RT), Arg282, 291–294 (GEKA), 301–302 (RT), and Tyr336 each bind 3',5'-cyclic GMP. A cGMP-binding, low affinity region spans residues 221 to 341 (TFQSLPEEIL…SNKAYEDAEA (121 aa)). The Protein kinase domain maps to 360–619 (FNIIDTLGVG…VKDIQKHKWF (260 aa)). Residues 366–374 (LGVGGFGRV) and Lys390 contribute to the ATP site. The Proton acceptor role is filled by Asp484. Position 515 is a phosphothreonine (Thr515). An AGC-kinase C-terminal domain is found at 620-671 (EGFNWEGLRKGTLTPPIIPSVASPTDTSNFDGFPEDNDEPPPDDNSGWDIDF). A disordered region spans residues 635 to 671 (PIIPSVASPTDTSNFDGFPEDNDEPPPDDNSGWDIDF). Residues 652-661 (FPEDNDEPPP) are compositionally biased toward acidic residues.

This sequence belongs to the protein kinase superfamily. AGC Ser/Thr protein kinase family. cGMP subfamily. Isoform alpha: parallel homodimer or heterodimer and also heterotetramer. Interacts directly with PPP1R12A. Non-covalent dimer of dimer of PRKG1-PRKG1 and PPP1R12A-PPP1R12A. This interaction targets PRKG1 to stress fibers to mediate smooth muscle cell relaxation and vasodilation in responses to rises in cGMP. Isoform beta: antiparallel homodimer. Part of cGMP kinase signaling complex at least composed of ACTA2/alpha-actin, CNN1/calponin H1, PLN/phospholamban, PRKG1 and ITPR1. Interacts with IRAG1. Forms a stable complex with ITPR1, IRAG1, and isoform beta of PRKG1. Interacts with TRPC7 (via ankyrin repeat domain). Isoform alpha interacts with RGS2. Interacts with GTF2I. Autophosphorylation increases kinase activity. Post-translationally, 65 kDa monomer is produced by proteolytic cleavage.

Its subcellular location is the cytoplasm. The enzyme catalyses L-seryl-[protein] + ATP = O-phospho-L-seryl-[protein] + ADP + H(+). It carries out the reaction L-threonyl-[protein] + ATP = O-phospho-L-threonyl-[protein] + ADP + H(+). In the absence of cGMP, PRKG1 activity is suppressed by autoinhibitory contacts. Functionally, serine/threonine protein kinase that acts as a key mediator of the nitric oxide (NO)/cGMP signaling pathway. GMP binding activates PRKG1, which phosphorylates serines and threonines on many cellular proteins. Numerous protein targets for PRKG1 phosphorylation are implicated in modulating cellular calcium, but the contribution of each of these targets may vary substantially among cell types. Proteins that are phosphorylated by PRKG1 regulate platelet activation and adhesion, smooth muscle contraction, cardiac function, gene expression, feedback of the NO-signaling pathway, and other processes involved in several aspects of the CNS like axon guidance, hippocampal and cerebellar learning, circadian rhythm and nociception. Smooth muscle relaxation is mediated through lowering of intracellular free calcium, by desensitization of contractile proteins to calcium, and by decrease in the contractile state of smooth muscle or in platelet activation. Regulates intracellular calcium levels via several pathways: phosphorylates IRAG1 and inhibits IP3-induced Ca(2+) release from intracellular stores, phosphorylation of KCNMA1 (BKCa) channels decreases intracellular Ca(2+) levels, which leads to increased opening of this channel. PRKG1 phosphorylates the canonical transient receptor potential channel (TRPC) family which inactivates the associated inward calcium current. Another mode of action of NO/cGMP/PKGI signaling involves PKGI-mediated inactivation of the Ras homolog gene family member A (RhoA). Phosphorylation of RHOA by PRKG1 blocks the action of this protein in myriad processes: regulation of RHOA translocation; decreasing contraction; controlling vesicle trafficking, reduction of myosin light chain phosphorylation resulting in vasorelaxation. Activation of PRKG1 by NO signaling also alters gene expression in a number of tissues. In smooth muscle cells, increased cGMP and PRKG1 activity influence expression of smooth muscle-specific contractile proteins, levels of proteins in the NO/cGMP signaling pathway, down-regulation of the matrix proteins osteopontin and thrombospondin-1 to limit smooth muscle cell migration and phenotype. Regulates vasodilator-stimulated phosphoprotein (VASP) functions in platelets and smooth muscle. The chain is cGMP-dependent protein kinase 1 (PRKG1) from Oryctolagus cuniculus (Rabbit).